Consider the following 98-residue polypeptide: DNA-binding protein Fis (98 aa).

A DNA-binding region (H-T-H motif) is located at residues 74–93 (QTRAATMMGINRGTLRKKLK).

Belongs to the transcriptional regulatory Fis family. In terms of assembly, homodimer.

Activates ribosomal RNA transcription. Plays a direct role in upstream activation of rRNA promoters. This Photobacterium profundum (strain SS9) protein is DNA-binding protein Fis.